Reading from the N-terminus, the 377-residue chain is GDP-mannose 3,5-epimerase (377 aa).

An N-acetylglycine modification is found at glycine 2. NAD(+)-binding positions include 34-60 (GAGG…SDWK), aspartate 58, and aspartate 78. Substrate is bound by residues glycine 103 and 143–145 (SAC). Residues tyrosine 174 and lysine 178 each coordinate NAD(+). Tyrosine 174 serves as the catalytic Proton acceptor. Substrate contacts are provided by residues asparagine 203, 216–218 (EKA), lysine 225, 241–243 (QTR), arginine 306, and serine 356. Phosphoserine is present on serine 369.

It belongs to the NAD(P)-dependent epimerase/dehydratase family. As to quaternary structure, homodimer. Interacts with chaperone Hsc70-3 protein, which may regulate epimerase activity. Requires NAD(+) as cofactor.

It catalyses the reaction GDP-alpha-D-mannose = GDP-beta-L-gulose. The enzyme catalyses GDP-beta-L-gulose = GDP-beta-L-galactose. It functions in the pathway cofactor biosynthesis; L-ascorbate biosynthesis via GDP-alpha-D-mannose pathway; L-ascorbate from GDP-alpha-D-mannose: step 1/5. Its activity is regulated as follows. Inhibited by GDP and GDP-D-glucose. Its function is as follows. Catalyzes a reversible epimerization of GDP-D-mannose that precedes the committed step in the biosynthesis of vitamin C (L-ascorbate), resulting in the hydrolysis of the highly energetic glycosyl-pyrophosphoryl linkage. Able to catalyze 2 distinct epimerization reactions and can release both GDP-L-galactose and GDP-L-gulose from GDP-mannose. This is GDP-mannose 3,5-epimerase from Arabidopsis thaliana (Mouse-ear cress).